The chain runs to 309 residues: Taste receptor type 2 member 20 (309 aa).

Over 1 to 6 the chain is Extracellular; it reads MMSFLH. The chain crosses the membrane as a helical span at residues 7–27; the sequence is IVFSILVVVAFILGNFANGFI. The Cytoplasmic portion of the chain corresponds to 28 to 46; sequence ALINFIAWVKRQKISSADQ. The chain crosses the membrane as a helical span at residues 47–67; it reads IIAALAVSRVGLLWVILLHWY. Over 68 to 79 the chain is Extracellular; that stretch reads STVLNPTSSNLK. A helical membrane pass occupies residues 80–100; it reads VIIFISNAWAVTNHFSIWLAT. At 101–125 the chain is on the cytoplasmic side; that stretch reads SLSIFYLLKIVNFSRLIFHHLKRKA. The helical transmembrane segment at 126–146 threads the bilayer; sequence KSVVLVIVLGSLFFLVCHLVM. Over 147-178 the chain is Extracellular; it reads KHTYINVWTEECEGNVTWKIKLRNAMHLSNLT. N161 and N176 each carry an N-linked (GlcNAc...) asparagine glycan. The helical transmembrane segment at 179–199 threads the bilayer; that stretch reads VAMLANLIPFTLTLISFLLLI. Residues 200 to 229 lie on the Cytoplasmic side of the membrane; sequence YSLCKHLKKMQLHGKGSQDPSTKIHIKALQ. Residues 230 to 250 traverse the membrane as a helical segment; the sequence is TVTSFLILLAIYFLCLIISFW. Topologically, residues 251-259 are extracellular; sequence NFKMRPKEI. The helical transmembrane segment at 260-280 threads the bilayer; the sequence is VLMLCQAFGIIYPSFHSFILI. The Cytoplasmic portion of the chain corresponds to 281–309; the sequence is WGNKTLKQTFLSVLWQVTCWAKGQNQSTP.

The protein belongs to the G-protein coupled receptor T2R family. In terms of tissue distribution, expressed in subsets of taste receptor cells of the tongue and exclusively in gustducin-positive cells.

The protein resides in the membrane. In terms of biological role, receptor that may play a role in the perception of bitterness and is gustducin-linked. May play a role in sensing the chemical composition of the gastrointestinal content. The activity of this receptor may stimulate alpha gustducin, mediate PLC-beta-2 activation and lead to the gating of TRPM5. The sequence is that of Taste receptor type 2 member 20 (TAS2R20) from Homo sapiens (Human).